The primary structure comprises 102 residues: Urease subunit beta (102 aa).

This sequence belongs to the urease beta subunit family. In terms of assembly, heterotrimer of UreA (gamma), UreB (beta) and UreC (alpha) subunits. Three heterotrimers associate to form the active enzyme.

Its subcellular location is the cytoplasm. The catalysed reaction is urea + 2 H2O + H(+) = hydrogencarbonate + 2 NH4(+). It functions in the pathway nitrogen metabolism; urea degradation; CO(2) and NH(3) from urea (urease route): step 1/1. This chain is Urease subunit beta, found in Methylobacillus flagellatus (strain ATCC 51484 / DSM 6875 / VKM B-1610 / KT).